Here is a 191-residue protein sequence, read N- to C-terminus: RRP15-like protein (191 aa).

Over residues 1-11 the composition is skewed to basic and acidic residues; the sequence is MSTKNRDRLVV. A disordered region spans residues 1-52; it reads MSTKNRDRLVVTEDSDDDNEREEMSSGGESGEEGPSSVDGGAGDADETVAFP. Residues 53–84 adopt a coiled-coil conformation; the sequence is AIERRKKKVIKKLTKKEQSLKKSVKEYRIKLA. The segment covering 119–153 has biased composition (basic and acidic residues); sequence QKTMSDAVKEKMTARERREARQRFDGKNFDSDRFA. The disordered stretch occupies residues 119 to 191; sequence QKTMSDAVKE…IDTGNYSDED (73 aa). The span at 166–191 shows a compositional bias: acidic residues; the sequence is GEDDDGEDQMDIGEEQIDTGNYSDED.

The protein belongs to the RRP15 family.

The sequence is that of RRP15-like protein from Caenorhabditis elegans.